A 461-amino-acid chain; its full sequence is Inositol-trisphosphate 3-kinase A (461 aa).

The tract at residues Met-1–Arg-29 is disordered. The interval Met-1–Leu-133 is required for cytoskeleton location. Arg-35, Arg-55, and Arg-62 each carry omega-N-methylarginine. A disordered region spans residues Ala-49–Asp-160. The span at Arg-118 to Leu-134 shows a compositional bias: low complexity. A phosphoserine mark is found at Ser-137 and Ser-197. ATP-binding positions include Ser-197, Lys-209, Gln-249–Leu-251, and Asp-262. Residues Lys-264 and Arg-285 each contribute to the substrate site. The segment at Asp-287 to Val-295 is calmodulin-binding. A substrate-binding site is contributed by Lys-312 to Arg-319. Residues Lys-336 and Asp-416 each contribute to the ATP site. Position 419 (Lys-419) interacts with substrate.

It belongs to the inositol phosphokinase (IPK) family. Expressed in brain.

Its subcellular location is the cytoplasm. The protein localises to the cytoskeleton. The catalysed reaction is 1D-myo-inositol 1,4,5-trisphosphate + ATP = 1D-myo-inositol 1,3,4,5-tetrakisphosphate + ADP + H(+). Activated by calcium/calmodulin. Catalyzes the phosphorylation of 1D-myo-inositol 1,4,5-trisphosphate (InsP3) into 1D-myo-inositol 1,3,4,5-tetrakisphosphate and participates to the regulation of calcium homeostasis. The chain is Inositol-trisphosphate 3-kinase A from Homo sapiens (Human).